The primary structure comprises 321 residues: Lipoyl synthase (321 aa).

Positions 68, 73, 79, 94, 98, 101, and 308 each coordinate [4Fe-4S] cluster. The region spanning 80-297 is the Radical SAM core domain; the sequence is FNHGTATFMI…KAEALAMGFT (218 aa).

Belongs to the radical SAM superfamily. Lipoyl synthase family. Requires [4Fe-4S] cluster as cofactor.

The protein resides in the cytoplasm. It carries out the reaction [[Fe-S] cluster scaffold protein carrying a second [4Fe-4S](2+) cluster] + N(6)-octanoyl-L-lysyl-[protein] + 2 oxidized [2Fe-2S]-[ferredoxin] + 2 S-adenosyl-L-methionine + 4 H(+) = [[Fe-S] cluster scaffold protein] + N(6)-[(R)-dihydrolipoyl]-L-lysyl-[protein] + 4 Fe(3+) + 2 hydrogen sulfide + 2 5'-deoxyadenosine + 2 L-methionine + 2 reduced [2Fe-2S]-[ferredoxin]. It participates in protein modification; protein lipoylation via endogenous pathway; protein N(6)-(lipoyl)lysine from octanoyl-[acyl-carrier-protein]: step 2/2. Its function is as follows. Catalyzes the radical-mediated insertion of two sulfur atoms into the C-6 and C-8 positions of the octanoyl moiety bound to the lipoyl domains of lipoate-dependent enzymes, thereby converting the octanoylated domains into lipoylated derivatives. In Escherichia coli O9:H4 (strain HS), this protein is Lipoyl synthase.